The sequence spans 399 residues: Bifunctional enzyme IspD/IspF (399 aa).

The segment at 1–239 (MHTWALLLAA…SSEKKNMQVP (239 aa)) is 2-C-methyl-D-erythritol 4-phosphate cytidylyltransferase. Residues 240–399 (CVGWGYDVHR…AVTALRRVSS (160 aa)) are 2-C-methyl-D-erythritol 2,4-cyclodiphosphate synthase. A divalent metal cation is bound by residues D246 and H248. 4-CDP-2-C-methyl-D-erythritol 2-phosphate contacts are provided by residues 246 to 248 (DVH) and 273 to 274 (HS). An a divalent metal cation-binding site is contributed by H281. 4-CDP-2-C-methyl-D-erythritol 2-phosphate is bound by residues 295 to 297 (DIG), 300 to 304 (FPDTD), 371 to 374 (TTEE), and F378.

This sequence in the N-terminal section; belongs to the IspD/TarI cytidylyltransferase family. IspD subfamily. In the C-terminal section; belongs to the IspF family. A divalent metal cation serves as cofactor.

The catalysed reaction is 2-C-methyl-D-erythritol 4-phosphate + CTP + H(+) = 4-CDP-2-C-methyl-D-erythritol + diphosphate. It catalyses the reaction 4-CDP-2-C-methyl-D-erythritol 2-phosphate = 2-C-methyl-D-erythritol 2,4-cyclic diphosphate + CMP. It participates in isoprenoid biosynthesis; isopentenyl diphosphate biosynthesis via DXP pathway; isopentenyl diphosphate from 1-deoxy-D-xylulose 5-phosphate: step 2/6. The protein operates within isoprenoid biosynthesis; isopentenyl diphosphate biosynthesis via DXP pathway; isopentenyl diphosphate from 1-deoxy-D-xylulose 5-phosphate: step 4/6. Functionally, bifunctional enzyme that catalyzes the formation of 4-diphosphocytidyl-2-C-methyl-D-erythritol from CTP and 2-C-methyl-D-erythritol 4-phosphate (MEP) (IspD), and catalyzes the conversion of 4-diphosphocytidyl-2-C-methyl-D-erythritol 2-phosphate (CDP-ME2P) to 2-C-methyl-D-erythritol 2,4-cyclodiphosphate (ME-CPP) with a corresponding release of cytidine 5-monophosphate (CMP) (IspF). The protein is Bifunctional enzyme IspD/IspF of Oleidesulfovibrio alaskensis (strain ATCC BAA-1058 / DSM 17464 / G20) (Desulfovibrio alaskensis).